Here is a 939-residue protein sequence, read N- to C-terminus: cGMP-dependent 3',5'-cyclic phosphodiesterase (939 aa).

Residue Gly-2 is the site of N-myristoyl glycine attachment. Residues Cys-5 and Cys-11 are each lipidated (S-palmitoyl cysteine). Residues 16–38 form a disordered region; the sequence is YPAARPAEPRGQQVFLKPDEPPP. Phosphoserine is present on Ser-116. Residues 197–217 are disordered; that stretch reads PEAVQNTSVDASEDQKDEKGY. GAF domains lie at 236–373 and 408–547; these read ATSL…HYTG and DVSV…GISI. 3',5'-cyclic GMP contacts are provided by Ser-430, Asp-445, Ile-464, Tyr-487, and Thr-498. The PDEase domain maps to 577 to 901; that stretch reads SDDEYTKLLH…EHWTKVSHKF (325 aa). His-655 (proton donor) is an active-site residue. Residues His-659, His-695, Asp-696, and Asp-807 each coordinate Zn(2+). Residue Asp-696 coordinates Mg(2+).

Belongs to the cyclic nucleotide phosphodiesterase family. PDE2 subfamily. As to quaternary structure, homodimer. Requires Zn(2+) as cofactor. Mg(2+) serves as cofactor. In terms of tissue distribution, expressed in brain and liver (at protein level).

Its subcellular location is the cytoplasm. The protein resides in the mitochondrion matrix. It localises to the mitochondrion inner membrane. It is found in the mitochondrion outer membrane. The protein localises to the cell membrane. It catalyses the reaction a nucleoside 3',5'-cyclic phosphate + H2O = a nucleoside 5'-phosphate + H(+). It carries out the reaction 3',5'-cyclic GMP + H2O = GMP + H(+). The enzyme catalyses 3',5'-cyclic AMP + H2O = AMP + H(+). With respect to regulation, the 3',5'-cyclic-AMP phosphodiesterase activity is stimulated by 3',5'-cyclic GMP. Specifically inhibited by Bay 60-7550. CGMP-activated cyclic nucleotide phosphodiesterase with a dual-specificity for the second messengers cAMP and cGMP, which are key regulators of many important physiological processes. Has a higher efficiency with cGMP compared to cAMP. Plays a role in cell growth and migration. In terms of biological role, regulates mitochondrial cAMP levels and respiration. Involved in the regulation of mitochondria morphology/dynamics and apoptotic cell death via local modulation of cAMP/PKA signaling in the mitochondrion, including the monitoring of local cAMP levels at the outer mitochondrial membrane and of PKA-dependent phosphorylation of DNM1L. This Mus musculus (Mouse) protein is cGMP-dependent 3',5'-cyclic phosphodiesterase.